A 203-amino-acid polypeptide reads, in one-letter code: MFEGPVQDLIDELGKLPGIGPKSAQRIAFHLLSVEPPDIDRLTAVLARVRDGVRFCAVCGNVSDDERCRICSDPRRDASVVCVVEEPKDVQAVERTREFRGRYHVLGGALDPLSGVGPDQLRIRELLSRIGERVDDVDITEVIIATDPNTEGEATATYLVRMLRDIPGLTVTRIASGLPMGGDLEFADELTLGRALAGRRAMV.

Residues 56 to 71 form a C4-type zinc finger; it reads CAVCGNVSDDERCRIC. In terms of domain architecture, Toprim spans 79 to 179; sequence SVVCVVEEPK…TVTRIASGLP (101 aa).

The protein belongs to the RecR family.

In terms of biological role, may play a role in DNA repair. It seems to be involved in an RecBC-independent recombinational process of DNA repair. It may act with RecF and RecO. This is Recombination protein RecR from Mycobacterium avium (strain 104).